The following is a 251-amino-acid chain: 3-deoxy-manno-octulosonate cytidylyltransferase (251 aa).

It belongs to the KdsB family.

It localises to the cytoplasm. The catalysed reaction is 3-deoxy-alpha-D-manno-oct-2-ulosonate + CTP = CMP-3-deoxy-beta-D-manno-octulosonate + diphosphate. Its pathway is nucleotide-sugar biosynthesis; CMP-3-deoxy-D-manno-octulosonate biosynthesis; CMP-3-deoxy-D-manno-octulosonate from 3-deoxy-D-manno-octulosonate and CTP: step 1/1. It participates in bacterial outer membrane biogenesis; lipopolysaccharide biosynthesis. Functionally, activates KDO (a required 8-carbon sugar) for incorporation into bacterial lipopolysaccharide in Gram-negative bacteria. This Parabacteroides distasonis (strain ATCC 8503 / DSM 20701 / CIP 104284 / JCM 5825 / NCTC 11152) protein is 3-deoxy-manno-octulosonate cytidylyltransferase.